Here is a 197-residue protein sequence, read N- to C-terminus: SERTA domain-containing protein 3 (197 aa).

The tract at residues Met1–Ser23 is disordered. In terms of domain architecture, SERTA spans Leu27 to Pro74.

Interacts with RPA2.

The protein localises to the nucleus. It is found in the nucleolus. In terms of biological role, antiviral interferon-stimulated protein that plays a role in innate immunity and in the suppression of viruses through different mechanisms. Plays a role in the late phase response of TLR-induced immune effector expression. Strong transcriptional coactivator. The sequence is that of SERTA domain-containing protein 3 (Sertad3) from Mus musculus (Mouse).